A 284-amino-acid chain; its full sequence is Nucleoid occlusion protein (284 aa).

A DNA-binding region (H-T-H motif) is located at residues 143–162; the sequence is EALAQRVGKSQSAIANKMRL.

This sequence belongs to the ParB family.

The protein resides in the cytoplasm. It localises to the nucleoid. Effects nucleoid occlusion by binding relatively nonspecifically to DNA and preventing the assembly of the division machinery in the vicinity of the nucleoid, especially under conditions that disturb the cell cycle. It helps to coordinate cell division and chromosome segregation by preventing the formation of the Z ring through the nucleoid, which would cause chromosome breakage. This chain is Nucleoid occlusion protein, found in Listeria innocua serovar 6a (strain ATCC BAA-680 / CLIP 11262).